Reading from the N-terminus, the 2266-residue chain is RNA1 polyprotein (2266 aa).

Residues 566–1158 (LCTALAAGIF…AGRDYLVQNG (593 aa)) lie on the Cytoplasmic side of the membrane. The SF3 helicase domain occupies 751 to 917 (MKDLVELHKR…PGVIYDPENP (167 aa)). An ATP-binding site is contributed by 781–788 (GQRHCGKS). The chain crosses the membrane as a helical span at residues 1159–1179 (CGILMIAAALILILVSGWGFW). At 1180-1205 (KLFVGLFSGTMSLGAAITGMSAVDIK) the chain is on the lumenal side. The Peptidase C3 domain maps to 1229–1438 (AYARSQAGDG…WADIMPPNSL (210 aa)). Residues H1272, E1310, and C1402 each act as for picornain 3C-like protease activity in the active site. Residues 1715-1843 (NEAINCDYSG…SVSPSIASWF (129 aa)) form the RdRp catalytic domain.

The protein belongs to the nepoviruses RNA1 polyprotein family. Specific enzymatic cleavages by picornain 3C-like protease in vivo yield mature proteins. Picornain 3C-like protease is autocatalytically processed. In terms of processing, VPg is uridylylated by the polymerase and is covalently linked to the 5'-end of genomic RNA. This uridylylated form acts as a nucleotide-peptide primer for the polymerase.

It localises to the host endoplasmic reticulum lumen. The protein localises to the host endoplasmic reticulum membrane. The catalysed reaction is RNA(n) + a ribonucleoside 5'-triphosphate = RNA(n+1) + diphosphate. Functionally, picornain 3C-like protease is a thiol protease that cleaves the P1 and P2 polyproteins. The sequence is that of RNA1 polyprotein from Tomato black ring virus (strain MJ) (TBRV).